Here is a 151-residue protein sequence, read N- to C-terminus: Mediator of RNA polymerase II transcription subunit 31 (151 aa).

Residues 1-18 show a composition bias toward pro residues; the sequence is MEQPPPADQPQQPPPPTL. Disordered stretches follow at residues 1-20 and 131-151; these read MEQP…TLTN and AEPV…AKAS.

This sequence belongs to the Mediator complex subunit 31 family. As to quaternary structure, component of the Mediator complex.

The protein resides in the nucleus. Functionally, component of the Mediator complex, a coactivator involved in the regulated transcription of nearly all RNA polymerase II-dependent genes. Mediator functions as a bridge to convey information from gene-specific regulatory proteins to the basal RNA polymerase II transcription machinery. Mediator is recruited to promoters by direct interactions with regulatory proteins and serves as a scaffold for the assembly of a functional preinitiation complex with RNA polymerase II and the general transcription factors. The chain is Mediator of RNA polymerase II transcription subunit 31 (soh1) from Aspergillus niger (strain ATCC MYA-4892 / CBS 513.88 / FGSC A1513).